Consider the following 684-residue polypeptide: MKFKSLITTTLALGVLASTGANFNNNEASAAAKPLDKSSSSLHHGYSKVHVPYAITVNGTSQNILSSLTFNKNQNISYKDLEDRVKSVLKSDRGISDIDLRLSKQAKYTVYFKNGTKKVIDLKAGIYTADLINTSEIKAININVDTKKQVEDKKKDKANYQVPYTITVNGTSQNILSNLTFNKNQNISYKDLEDKVKSVLESNRGITDVDLRLSKQAKYTVNFKNGTKKVIDLKSGIYTANLINSSDIKSININVDTKKHIENKAKRNYQVPYSINLNGTSTNILSNLSFSNKPWTNYKNLTSQIKSVLKHDRGISEQDLKYAKKAYYTVYFKNGGKRILQLNSKNYTANLVHAKDVKRIEITVKTGTKAKADRYVPYTIAVNGTSTPILSDLKFTGDPRVGYKDISKKVKSVLKHDRGIGERELKYAKKATYTVHFKNGTKKVININSNISQLNLLYVQDIKKIDIDVKTGTKAKADSYVPYTIAVNGTSTPILSKLKISNKQLISYKYLNDKVKSVLKSERGISDLDLKFAKQAKYTVYFKNGKKQVVNLKSDIFTPNLFSAKDIKKIDIDVKQYTKSKKNNKSNNVKFPVTINKFENIVSNEFVFYNASKITINDLSIKLKSAMANDQGITKHDIGLAERAVYKVYFKNGSSKYVDLKTEYKDERVFKATDIKKVDIELKF.

Residues methionine 1–alanine 30 form the signal peptide. 6 MAP repeats span residues glycine 45 to lysine 154, aspartate 156 to alanine 265, lysine 266 to arginine 374, tyrosine 375 to lysine 474, alanine 475 to asparagine 584, and serine 586 to phenylalanine 684.

Its subcellular location is the cell membrane. Its function is as follows. Binds various plasma and ECM-proteins. The protein is 77 kDa membrane protein of Staphylococcus aureus (strain COL).